A 394-amino-acid chain; its full sequence is Uroporphyrinogen decarboxylase 2, chloroplastic (394 aa).

Residues 74-78 (RQAGR), Phe-93, Ser-123, Asp-124, Tyr-201, Ser-256, and His-371 contribute to the substrate site.

It belongs to the uroporphyrinogen decarboxylase family. As to quaternary structure, homodimer.

Its subcellular location is the plastid. It is found in the chloroplast. The enzyme catalyses uroporphyrinogen III + 4 H(+) = coproporphyrinogen III + 4 CO2. Its pathway is porphyrin-containing compound metabolism; protoporphyrin-IX biosynthesis; coproporphyrinogen-III from 5-aminolevulinate: step 4/4. The protein operates within porphyrin-containing compound metabolism; chlorophyll biosynthesis. In terms of biological role, catalyzes the decarboxylation of four acetate groups of uroporphyrinogen-III to yield coproporphyrinogen-III. This chain is Uroporphyrinogen decarboxylase 2, chloroplastic (HEME2), found in Arabidopsis thaliana (Mouse-ear cress).